A 104-amino-acid polypeptide reads, in one-letter code: BLOC-1-related complex subunit 7 (104 aa).

This sequence belongs to the BORCS7 family.

It localises to the lysosome membrane. Functionally, as part of a BORC-like complex may play a role in lysosomes movement and localization at the cell periphery. Associated with the cytosolic face of lysosomes, this complex may couple lysosomes to microtubule plus-end-directed kinesin motor. This Xenopus tropicalis (Western clawed frog) protein is BLOC-1-related complex subunit 7.